Reading from the N-terminus, the 102-residue chain is Small ribosomal subunit protein uS10 (102 aa).

The protein belongs to the universal ribosomal protein uS10 family. Part of the 30S ribosomal subunit.

Involved in the binding of tRNA to the ribosomes. In Malacoplasma penetrans (strain HF-2) (Mycoplasma penetrans), this protein is Small ribosomal subunit protein uS10.